An 80-amino-acid polypeptide reads, in one-letter code: MADQFADSANNVVIEEVNKGLNPGMIVLIVVATFLLLFFVGNYALYVYAQKTLPPRKKKPVSKKKMKREKLKQGVSAPGE.

A Nuclear localization signal motif is present at residues 54-59 (PPRKKK). The segment covering 55–70 (PRKKKPVSKKKMKREK) has biased composition (basic residues). The interval 55–80 (PRKKKPVSKKKMKREKLKQGVSAPGE) is disordered.

Belongs to the S1FA transcription factor family.

Its subcellular location is the nucleus. DNA-binding protein that specifically recognizes a negative element (S1F) within the RPS1 promoter. This Oryza sativa subsp. japonica (Rice) protein is DNA-binding protein S1FA2 (S1FA2).